The chain runs to 479 residues: Ribosomal RNA small subunit methyltransferase F (479 aa).

S-adenosyl-L-methionine contacts are provided by residues Ala-125–Lys-131, Glu-149, Asp-176, and Asp-194. Cys-247 serves as the catalytic Nucleophile.

This sequence belongs to the class I-like SAM-binding methyltransferase superfamily. RsmB/NOP family.

The protein localises to the cytoplasm. The enzyme catalyses cytidine(1407) in 16S rRNA + S-adenosyl-L-methionine = 5-methylcytidine(1407) in 16S rRNA + S-adenosyl-L-homocysteine + H(+). In terms of biological role, specifically methylates the cytosine at position 1407 (m5C1407) of 16S rRNA. This is Ribosomal RNA small subunit methyltransferase F from Escherichia coli O157:H7 (strain EC4115 / EHEC).